Here is a 1326-residue protein sequence, read N- to C-terminus: Putative late blight resistance protein homolog R1B-19 (1326 aa).

2 coiled-coil regions span residues 421–444 (RYSD…ESLQ) and 536–558 (PRMK…KLLN). 570–577 (GMPGLGKT) is a binding site for ATP. An NB-ARC domain is found at 611 to 864 (LLSLLCDTIG…KVKTCRLHDV (254 aa)). Residues 749 to 770 (SEMEKEVECWEQVANNLGTRIH) adopt a coiled-coil conformation. LRR repeat units lie at residues 953 to 978 (FKFL…VYLK), 980 to 996 (FSAH…IYNL), 1027 to 1050 (LRHL…SAKL), 1053 to 1070 (LETL…LNFP), 1071 to 1094 (IRLE…ISAP), 1098 to 1118 (YLKL…ADHL), 1119 to 1146 (KNLE…MFPQ), 1167 to 1191 (FPNL…AMNI), and 1208 to 1230 (LIEK…AFKR). The HMA domain occupies 1209–1278 (IEKKTLKLNL…AWHARVVVPT (70 aa)).

It belongs to the disease resistance NB-LRR family.

It localises to the cytoplasm. It is found in the membrane. Its function is as follows. Confers resistance to late blight (Phytophthora infestans) races carrying the avirulence gene Avr1. Resistance proteins guard the plant against pathogens that contain an appropriate avirulence protein via an indirect interaction with this avirulence protein. That triggers a defense system including the hypersensitive response, which restricts the pathogen growth. In Solanum demissum (Wild potato), this protein is Putative late blight resistance protein homolog R1B-19 (R1B-19).